Here is an 876-residue protein sequence, read N- to C-terminus: Nitrogen regulatory protein areA (876 aa).

Residues 1–11 (MSGLTLGGGSG) are compositionally biased toward gly residues. 6 disordered regions span residues 1-65 (MSGL…PTDS), 137-159 (QERERAQQQARASSQKSPVPGMS), 192-248 (IPFS…ESEF), 393-413 (FSPPPSGYQSTASTPQPAYDG), 451-498 (YMYN…PNEF), and 573-672 (SADM…GPTT). 3 stretches are compositionally biased toward polar residues: residues 198-211 (DHPSPSTTKASEAT), 399-408 (GYQSTASTPQ), and 455-480 (QGGSSQDITQQNAHMGAQSSSMQSPG). Over residues 602 to 611 (VRNRDQDPRR) the composition is skewed to basic and acidic residues. The span at 615–640 (ARTSSTPNTAQLLRQSMQNQSSHTSP) shows a compositional bias: polar residues. The GATA-type zinc finger occupies 673 to 697 (CTNCFTQTTPLWRRNPEGQPLCNAC). The H-T-H motif DNA-binding region spans 721–742 (NRNSANSLAVGSSRVSKKSARK). Polar residues-rich tracts occupy residues 724–734 (SANSLAVGSSR) and 742–766 (KNSVQQVTPTAPTSSRAQSNTTSES). A disordered region spans residues 724 to 856 (SANSLAVGSS…MPPAAVNPAN (133 aa)). Low complexity-rich tracts occupy residues 782–798 (PIAAAPPKSSSAATTSP) and 828–855 (SPSSTSSGGRSKVVPLAPAMPPAAVNPA).

As to quaternary structure, interacts with nmrA.

It is found in the nucleus. Its function is as follows. Transcription activator that binds the consensus DNA element 5'-CGATAG-3' and mediates nitrogen metabolite repression. Activates the transcription of uapA. The protein is Nitrogen regulatory protein areA (areA) of Emericella nidulans (strain FGSC A4 / ATCC 38163 / CBS 112.46 / NRRL 194 / M139) (Aspergillus nidulans).